Here is a 525-residue protein sequence, read N- to C-terminus: Ankyrin repeat domain-containing protein SOWAHC (525 aa).

The interval 84 to 263 (CEGPSEPSGD…EESSGGGSVT (180 aa)) is disordered. Ser88 carries the phosphoserine modification. A compositionally biased stretch (low complexity) spans 101–112 (AEPEAPDGPAGP). Phosphoserine occurs at positions 126, 213, and 226. Residues 230-241 (SSGGGRGRGGGD) show a composition bias toward gly residues. A compositionally biased stretch (low complexity) spans 242 to 251 (SDSASVASSS). ANK repeat units follow at residues 301-330 (TGFT…KHQL) and 340-370 (GGYT…DVDI). Positions 434-525 (DGGDHHHHHH…TLRPKSNVFG (92 aa)) are disordered. Residues 468 to 477 (IKPRLNKIRF) show a composition bias toward basic residues. Over residues 489 to 509 (RDPEQPLEGRGEEGVGEERPV) the composition is skewed to basic and acidic residues.

Belongs to the SOWAH family.

This Homo sapiens (Human) protein is Ankyrin repeat domain-containing protein SOWAHC (SOWAHC).